Reading from the N-terminus, the 498-residue chain is Signal recognition particle receptor FtsY (498 aa).

Disordered regions lie at residues 1 to 130 (MGLF…PNQS) and 147 to 200 (KVES…YNRS). Low complexity predominate over residues 36–46 (ALLAETAETAE). The span at 103-120 (SENSVAAVQNNTETMPSQ) shows a compositional bias: polar residues. Residues 301 to 308 (GVNGVGKT), 383 to 387 (DTAGR), and 447 to 450 (TKID) each bind GTP.

The protein belongs to the GTP-binding SRP family. FtsY subfamily. Part of the signal recognition particle protein translocation system, which is composed of SRP and FtsY.

Its subcellular location is the cell membrane. It localises to the cytoplasm. It carries out the reaction GTP + H2O = GDP + phosphate + H(+). In terms of biological role, involved in targeting and insertion of nascent membrane proteins into the cytoplasmic membrane. Acts as a receptor for the complex formed by the signal recognition particle (SRP) and the ribosome-nascent chain (RNC). This Streptococcus mutans serotype c (strain ATCC 700610 / UA159) protein is Signal recognition particle receptor FtsY.